The sequence spans 298 residues: Small ribosomal subunit protein uS2 (298 aa).

The disordered stretch occupies residues 272-298 (EGGDWAASSAAPAGESWAEAQPTEAKW).

This sequence belongs to the universal ribosomal protein uS2 family. As to quaternary structure, component of the small ribosomal subunit. Mature ribosomes consist of a small (40S) and a large (60S) subunit. The 40S subunit contains about 33 different proteins and 1 molecule of RNA (18S). The 60S subunit contains about 49 different proteins and 3 molecules of RNA (25S, 5.8S and 5S). Interacts with rps21.

The protein localises to the cytoplasm. Required for the assembly and/or stability of the 40S ribosomal subunit. Required for the processing of the 20S rRNA-precursor to mature 18S rRNA in a late step of the maturation of 40S ribosomal subunits. This chain is Small ribosomal subunit protein uS2 (rps0), found in Aspergillus niger (strain ATCC MYA-4892 / CBS 513.88 / FGSC A1513).